The chain runs to 700 residues: Hedgehog-interacting protein (700 aa).

An N-terminal signal peptide occupies residues Met-1 to Gly-17. An N-linked (GlcNAc...) asparagine glycan is attached at Asn-99. Disulfide bonds link Cys-216–Cys-536, Cys-218–Cys-543, Cys-402–Cys-624, Cys-435–Cys-452, Cys-500–Cys-594, Cys-608–Cys-617, Cys-612–Cys-623, Cys-625–Cys-634, Cys-639–Cys-649, Cys-643–Cys-655, and Cys-657–Cys-666. An interaction with SHH zinc binding site region spans residues Leu-376–Phe-388. Zn(2+) is bound at residue Asp-383. N-linked (GlcNAc...) asparagine glycosylation is found at Asn-416, Asn-447, and Asn-459. EGF-like domains are found at residues Glu-607–Cys-634 and Arg-635–Glu-667.

This sequence belongs to the HHIP family. In terms of assembly, interacts with all three hedgehog family members, SHH, IHH and DHH. Widely expressed in fetal and adult tissues. Highest expression in adult heart, liver and pancreas, and in fetal kidney.

It is found in the cell membrane. Its subcellular location is the secreted. The protein resides in the cytoplasm. Functionally, modulates hedgehog signaling in several cell types including brain and lung through direct interaction with members of the hedgehog family. The polypeptide is Hedgehog-interacting protein (HHIP) (Homo sapiens (Human)).